The primary structure comprises 490 residues: Probable cytosol aminopeptidase (490 aa).

Mn(2+)-binding residues include Lys-256 and Asp-261. The active site involves Lys-268. Asp-280, Asp-340, and Glu-342 together coordinate Mn(2+). The active site involves Arg-344.

This sequence belongs to the peptidase M17 family. Mn(2+) is required as a cofactor.

It is found in the cytoplasm. It carries out the reaction Release of an N-terminal amino acid, Xaa-|-Yaa-, in which Xaa is preferably Leu, but may be other amino acids including Pro although not Arg or Lys, and Yaa may be Pro. Amino acid amides and methyl esters are also readily hydrolyzed, but rates on arylamides are exceedingly low.. The enzyme catalyses Release of an N-terminal amino acid, preferentially leucine, but not glutamic or aspartic acids.. Presumably involved in the processing and regular turnover of intracellular proteins. Catalyzes the removal of unsubstituted N-terminal amino acids from various peptides. This is Probable cytosol aminopeptidase from Prochlorococcus marinus (strain MIT 9313).